The chain runs to 334 residues: Small ribosomal subunit protein uS2 (334 aa).

Belongs to the universal ribosomal protein uS2 family.

The protein is Small ribosomal subunit protein uS2 of Xanthobacter autotrophicus (strain ATCC BAA-1158 / Py2).